The primary structure comprises 345 residues: S-adenosylmethionine:tRNA ribosyltransferase-isomerase (345 aa).

Belongs to the QueA family. Monomer.

The protein resides in the cytoplasm. The enzyme catalyses 7-aminomethyl-7-carbaguanosine(34) in tRNA + S-adenosyl-L-methionine = epoxyqueuosine(34) in tRNA + adenine + L-methionine + 2 H(+). The protein operates within tRNA modification; tRNA-queuosine biosynthesis. Functionally, transfers and isomerizes the ribose moiety from AdoMet to the 7-aminomethyl group of 7-deazaguanine (preQ1-tRNA) to give epoxyqueuosine (oQ-tRNA). This is S-adenosylmethionine:tRNA ribosyltransferase-isomerase from Shewanella baltica (strain OS185).